A 226-amino-acid chain; its full sequence is Probable chemoreceptor glutamine deamidase CheD (226 aa).

This sequence belongs to the CheD family.

The catalysed reaction is L-glutaminyl-[protein] + H2O = L-glutamyl-[protein] + NH4(+). Functionally, probably deamidates glutamine residues to glutamate on methyl-accepting chemotaxis receptors (MCPs), playing an important role in chemotaxis. The chain is Probable chemoreceptor glutamine deamidase CheD from Bordetella avium (strain 197N).